Consider the following 144-residue polypeptide: Granulocyte-macrophage colony-stimulating factor (144 aa).

Residues 1-17 form the signal peptide; sequence MWLQNLLLLGTVVCSFS. O-linked (GalNAc...) serine glycosylation occurs at serine 24. Threonine 27 is a glycosylation site (O-linked (GalNAc...) threonine). N-linked (GlcNAc...) asparagine glycosylation is found at asparagine 44 and asparagine 54. 2 disulfides stabilise this stretch: cysteine 71-cysteine 113 and cysteine 105-cysteine 138.

The protein belongs to the GM-CSF family. In terms of assembly, monomer. The signaling GM-CSF receptor complex is a dodecamer of two head-to-head hexamers of two alpha, two beta, and two ligand subunits.

The protein resides in the secreted. In terms of biological role, cytokine that stimulates the growth and differentiation of hematopoietic precursor cells from various lineages, including granulocytes, macrophages, eosinophils and erythrocytes. In Cervus elaphus (Red deer), this protein is Granulocyte-macrophage colony-stimulating factor (CSF2).